A 551-amino-acid chain; its full sequence is Arginine--tRNA ligase (551 aa).

Positions 123 to 133 (ANPTGPLTIGR) match the 'HIGH' region motif.

It belongs to the class-I aminoacyl-tRNA synthetase family. As to quaternary structure, monomer.

The protein resides in the cytoplasm. It catalyses the reaction tRNA(Arg) + L-arginine + ATP = L-arginyl-tRNA(Arg) + AMP + diphosphate. This chain is Arginine--tRNA ligase, found in Chlorobium limicola (strain DSM 245 / NBRC 103803 / 6330).